A 206-amino-acid chain; its full sequence is MPVPSRERVIELISELVHAQGYDVEDVVVTSAGKHSAVRIMVDSDAGIELDAAAEISRLVSELFDSLEEIGETPYTLEVTSPGIDRPLTLERHWRRARGRKARIDLAGETVVGRIGTLNDDSVAVVIGGRGGLTVREIALGDVQKAVVQVEFSKPSEAELELAGGIPEGRAVPSDAVDLTDDSGVDSVEDDEAELEDVENEEGFDK.

Residues 164–206 are disordered; that stretch reads GGIPEGRAVPSDAVDLTDDSGVDSVEDDEAELEDVENEEGFDK. Over residues 178–206 the composition is skewed to acidic residues; sequence DLTDDSGVDSVEDDEAELEDVENEEGFDK.

This sequence belongs to the RimP family.

It localises to the cytoplasm. Functionally, required for maturation of 30S ribosomal subunits. This chain is Ribosome maturation factor RimP, found in Rhodococcus erythropolis (strain PR4 / NBRC 100887).